A 341-amino-acid polypeptide reads, in one-letter code: ATPase GET3 (341 aa).

An ATP-binding site is contributed by 34-41 (KGGVGKTT). The active site involves Asp-63. Residues Glu-245 and Asn-272 each coordinate ATP. Residues Cys-283 and Cys-286 each contribute to the Zn(2+) site.

Belongs to the arsA ATPase family. As to quaternary structure, homodimer.

Its subcellular location is the cytoplasm. It localises to the endoplasmic reticulum. Functionally, ATPase required for the post-translational delivery of tail-anchored (TA) proteins to the endoplasmic reticulum. Recognizes and selectively binds the transmembrane domain of TA proteins in the cytosol. This complex then targets to the endoplasmic reticulum by membrane-bound receptors, where the tail-anchored protein is released for insertion. This process is regulated by ATP binding and hydrolysis. ATP binding drives the homodimer towards the closed dimer state, facilitating recognition of newly synthesized TA membrane proteins. ATP hydrolysis is required for insertion. Subsequently, the homodimer reverts towards the open dimer state, lowering its affinity for the membrane-bound receptor, and returning it to the cytosol to initiate a new round of targeting. This is ATPase GET3 from Paracoccidioides brasiliensis (strain Pb18).